A 402-amino-acid chain; its full sequence is Plasminogen activator inhibitor 1 (402 aa).

Residues 1–23 (MRMSPVFACLALGLALIFGEGSA) form the signal peptide. Asn232, Asn288, and Asn352 each carry an N-linked (GlcNAc...) asparagine glycan.

Belongs to the serpin family. In terms of assembly, forms a heterodimer with TMPRSS7. Interacts with VTN. Binds LRP1B; binding is followed by internalization and degradation. Interacts with PPP1CB. In complex with PLAU/uPA, interacts with PLAUR/uPAR. Interacts with SORL1 and LRP1, either alone or in complex with PLAU; these interactions are abolished in the presence of LRPAP1/RAP. The ternary complex composed of PLAUR-PLAU-PAI1 also interacts with SORL1. Interacts with PLAT/tPA. Also interacts with SORL1, when complexed to PLAT/tPA. As to expression, vascular endothelial cells may be the primary site of synthesis of plasma PAI1.

It localises to the secreted. In terms of biological role, serine protease inhibitor. Inhibits TMPRSS7. Is a primary inhibitor of tissue-type plasminogen activator (PLAT) and urokinase-type plasminogen activator (PLAU). As PLAT inhibitor, it is required for fibrinolysis down-regulation and is responsible for the controlled degradation of blood clots. As PLAU inhibitor, it is involved in the regulation of cell adhesion and spreading. Acts as a regulator of cell migration, independently of its role as protease inhibitor. It is required for stimulation of keratinocyte migration during cutaneous injury repair. It is involved in cellular and replicative senescence. Plays a role in alveolar type 2 cells senescence in the lung. Is involved in the regulation of cementogenic differentiation of periodontal ligament stem cells, and regulates odontoblast differentiation and dentin formation during odontogenesis. This chain is Plasminogen activator inhibitor 1 (SERPINE1), found in Bos taurus (Bovine).